Consider the following 100-residue polypeptide: Large ribosomal subunit protein eL21 (100 aa).

The segment at 1–21 (MVKRTHGYRYKSRKLLRKKPR) is disordered.

It belongs to the eukaryotic ribosomal protein eL21 family.

The sequence is that of Large ribosomal subunit protein eL21 from Pyrobaculum islandicum (strain DSM 4184 / JCM 9189 / GEO3).